A 58-amino-acid polypeptide reads, in one-letter code: Sodium/potassium-transporting ATPase subunit gamma (58 aa).

The chain crosses the membrane as a helical span at residues 20–39; the sequence is NGGLIFAALAFIVGLVIILS.

This sequence belongs to the FXYD family. As to quaternary structure, regulatory subunit of the sodium/potassium-transporting ATPase which is composed of a catalytic alpha subunit, an auxiliary non-catalytic beta subunit and an additional regulatory subunit. As to expression, highest levels expressed in the kidney and spleen. Restricted to the basolateral membrane in renal epithelial cells and varies in its level of expression along the nephron.

Its subcellular location is the membrane. May be involved in forming the receptor site for cardiac glycoside binding or may modulate the transport function of the sodium ATPase. This Bos taurus (Bovine) protein is Sodium/potassium-transporting ATPase subunit gamma (FXYD2).